A 457-amino-acid chain; its full sequence is Transmembrane protein 143 (457 aa).

Transmembrane regions (helical) follow at residues 264–284 (ILNVTLIVSGVVFFVNVGMVV) and 285–305 (LSDLKMATSLLLLLFAAFMGL). At Ser316 the chain carries Phosphoserine. The span at 429-439 (LSSPKSAPSDD) shows a compositional bias: polar residues. The segment at 429-457 (LSSPKSAPSDDNSLEKPLGPAQPSHLVGN) is disordered.

The protein resides in the membrane. This is Transmembrane protein 143 (TMEM143) from Bos taurus (Bovine).